We begin with the raw amino-acid sequence, 551 residues long: HTH-type transcriptional regulator SgrR (551 aa).

Positions 1–116 constitute an HTH marR-type domain; it reads MPSARLQQQF…LVSHLGRSFR (116 aa). Positions 26 to 49 form a DNA-binding region, H-T-H motif; it reads LNELAALLSCSRRHMRTLLNTMQD. The solute-binding stretch occupies residues 163-492; sequence ELEADIAHHW…IDWQADAARW (330 aa).

In terms of biological role, activates the small RNA gene sgrS under glucose-phosphate stress conditions as well as yfdZ. Represses its own transcription under both stress and non-stress conditions. Might act as a sensor of the intracellular accumulation of phosphoglucose by binding these molecules in its C-terminal solute-binding domain. The polypeptide is HTH-type transcriptional regulator SgrR (Shigella sonnei (strain Ss046)).